Here is a 276-residue protein sequence, read N- to C-terminus: Formamidopyrimidine-DNA glycosylase (276 aa).

Pro2 serves as the catalytic Schiff-base intermediate with DNA. The Proton donor role is filled by Glu3. Lys58 serves as the catalytic Proton donor; for beta-elimination activity. Residues His92, Arg111, and Lys154 each coordinate DNA. The FPG-type zinc finger occupies 239–273 (QVYGHVGEPCPVCGTKFEKIKVNGRGTTFCPHCQV). Arg263 functions as the Proton donor; for delta-elimination activity in the catalytic mechanism.

It belongs to the FPG family. As to quaternary structure, monomer. It depends on Zn(2+) as a cofactor.

It catalyses the reaction Hydrolysis of DNA containing ring-opened 7-methylguanine residues, releasing 2,6-diamino-4-hydroxy-5-(N-methyl)formamidopyrimidine.. The enzyme catalyses 2'-deoxyribonucleotide-(2'-deoxyribose 5'-phosphate)-2'-deoxyribonucleotide-DNA = a 3'-end 2'-deoxyribonucleotide-(2,3-dehydro-2,3-deoxyribose 5'-phosphate)-DNA + a 5'-end 5'-phospho-2'-deoxyribonucleoside-DNA + H(+). Functionally, involved in base excision repair of DNA damaged by oxidation or by mutagenic agents. Acts as a DNA glycosylase that recognizes and removes damaged bases. Has a preference for oxidized purines, such as 7,8-dihydro-8-oxoguanine (8-oxoG). Has AP (apurinic/apyrimidinic) lyase activity and introduces nicks in the DNA strand. Cleaves the DNA backbone by beta-delta elimination to generate a single-strand break at the site of the removed base with both 3'- and 5'-phosphates. This Lactobacillus helveticus (strain DPC 4571) protein is Formamidopyrimidine-DNA glycosylase.